A 510-amino-acid polypeptide reads, in one-letter code: Bifunctional pantoate ligase/cytidylate kinase (510 aa).

The segment at 1–276 (MKKVIIRKTE…CGETRLIDHV (276 aa)) is pantoate--beta-alanine ligase. 29–36 (MGNLHDGH) is an ATP binding site. The active-site Proton donor is the His36. A (R)-pantoate-binding site is contributed by Gln61. Position 61 (Gln61) interacts with beta-alanine. Residue 150 to 153 (GEKD) participates in ATP binding. Gln156 provides a ligand contact to (R)-pantoate. ATP is bound at residue 187-190 (LSSR). Positions 277–510 (FLMKRRPIIA…DRIPKETEIK (234 aa)) are cytidylate kinase.

This sequence in the N-terminal section; belongs to the pantothenate synthetase family. In the C-terminal section; belongs to the cytidylate kinase family. Type 1 subfamily.

Its subcellular location is the cytoplasm. The catalysed reaction is (R)-pantoate + beta-alanine + ATP = (R)-pantothenate + AMP + diphosphate + H(+). The enzyme catalyses CMP + ATP = CDP + ADP. It catalyses the reaction dCMP + ATP = dCDP + ADP. It participates in cofactor biosynthesis; (R)-pantothenate biosynthesis; (R)-pantothenate from (R)-pantoate and beta-alanine: step 1/1. Its function is as follows. Catalyzes the condensation of pantoate with beta-alanine in an ATP-dependent reaction via a pantoyl-adenylate intermediate. Functionally, catalyzes the transfer of a phosphate group from ATP to either CMP or dCMP to form CDP or dCDP and ADP, respectively. The polypeptide is Bifunctional pantoate ligase/cytidylate kinase (Prochlorococcus marinus (strain MIT 9301)).